The primary structure comprises 80 residues: MPFRFGTQPRRFPVEGGDSSIGLEPGLSSSATCNGKEMSPTRQLRRCPGSHCLTITDVPITVYAAMRKPPAQSSKEMHPK.

Residues 1-44 (MPFRFGTQPRRFPVEGGDSSIGLEPGLSSSATCNGKEMSPTRQL) form a disordered region.

This sequence belongs to the FAM229 family.

The sequence is that of Protein FAM229B (FAM229B) from Bos taurus (Bovine).